Here is a 305-residue protein sequence, read N- to C-terminus: Glycine--tRNA ligase alpha subunit (305 aa).

This sequence belongs to the class-II aminoacyl-tRNA synthetase family. In terms of assembly, tetramer of two alpha and two beta subunits.

Its subcellular location is the cytoplasm. The catalysed reaction is tRNA(Gly) + glycine + ATP = glycyl-tRNA(Gly) + AMP + diphosphate. The chain is Glycine--tRNA ligase alpha subunit from Streptococcus pneumoniae serotype 4 (strain ATCC BAA-334 / TIGR4).